Reading from the N-terminus, the 85-residue chain is U4-theraphotoxin-Hhn1f (85 aa).

The first 22 residues, 1–22, serve as a signal peptide directing secretion; sequence MKVTLIAILTCAAVLVLHTTAA. Positions 23-48 are excised as a propeptide; it reads EELEAESQLMEVGMPDTELAAVDEER. Cys71 and Cys82 are oxidised to a cystine.

This sequence belongs to the neurotoxin 12 (Hwtx-2) family. 02 (Hwtx-2) subfamily. Expressed by the venom gland.

It is found in the secreted. In terms of biological role, postsynaptic neurotoxin. This Cyriopagopus hainanus (Chinese bird spider) protein is U4-theraphotoxin-Hhn1f.